The following is a 281-amino-acid chain: NAD kinase (281 aa).

The active-site Proton acceptor is Asp-61. Residues 61-62, 134-135, Arg-145, Asp-164, 175-180, and Gln-234 each bind NAD(+); these read DG, ND, and TAYSLS.

Belongs to the NAD kinase family. Requires a divalent metal cation as cofactor.

The protein resides in the cytoplasm. It catalyses the reaction NAD(+) + ATP = ADP + NADP(+) + H(+). Involved in the regulation of the intracellular balance of NAD and NADP, and is a key enzyme in the biosynthesis of NADP. Catalyzes specifically the phosphorylation on 2'-hydroxyl of the adenosine moiety of NAD to yield NADP. The polypeptide is NAD kinase (Clostridium botulinum (strain ATCC 19397 / Type A)).